A 207-amino-acid chain; its full sequence is ATP-dependent Clp protease proteolytic subunit (207 aa).

S111 functions as the Nucleophile in the catalytic mechanism. Residue H136 is part of the active site.

It belongs to the peptidase S14 family. Fourteen ClpP subunits assemble into 2 heptameric rings which stack back to back to give a disk-like structure with a central cavity, resembling the structure of eukaryotic proteasomes.

It is found in the cytoplasm. It carries out the reaction Hydrolysis of proteins to small peptides in the presence of ATP and magnesium. alpha-casein is the usual test substrate. In the absence of ATP, only oligopeptides shorter than five residues are hydrolyzed (such as succinyl-Leu-Tyr-|-NHMec, and Leu-Tyr-Leu-|-Tyr-Trp, in which cleavage of the -Tyr-|-Leu- and -Tyr-|-Trp bonds also occurs).. In terms of biological role, cleaves peptides in various proteins in a process that requires ATP hydrolysis. Has a chymotrypsin-like activity. Plays a major role in the degradation of misfolded proteins. In Yersinia pseudotuberculosis serotype O:1b (strain IP 31758), this protein is ATP-dependent Clp protease proteolytic subunit.